A 257-amino-acid polypeptide reads, in one-letter code: Probable enoyl-CoA hydratase (257 aa).

It belongs to the enoyl-CoA hydratase/isomerase family.

The enzyme catalyses a (3S)-3-hydroxyacyl-CoA = a (2E)-enoyl-CoA + H2O. It catalyses the reaction a 4-saturated-(3S)-3-hydroxyacyl-CoA = a (3E)-enoyl-CoA + H2O. Its function is as follows. Could possibly oxidize fatty acids using specific components. The polypeptide is Probable enoyl-CoA hydratase (fadB1) (Rhizobium meliloti (strain 1021) (Ensifer meliloti)).